A 386-amino-acid chain; its full sequence is Probable mannan endo-1,4-beta-mannosidase A (386 aa).

Positions 1–21 (MKLNPSLLTAAGLVSAQLASA) are cleaved as a signal peptide. 2 residues coordinate substrate: W95 and N207. E208 (proton donor) is an active-site residue. Position 283 (Y283) interacts with substrate. E316 serves as the catalytic Nucleophile. N336 carries N-linked (GlcNAc...) asparagine glycosylation. W346 contacts substrate.

Belongs to the glycosyl hydrolase 5 (cellulase A) family.

The protein localises to the secreted. The catalysed reaction is Random hydrolysis of (1-&gt;4)-beta-D-mannosidic linkages in mannans, galactomannans and glucomannans.. In terms of biological role, endo-1,4-mannanase, a crucial enzyme for depolymerization of seed galactomannans and wood galactoglucomannans. This Aspergillus flavus (strain ATCC 200026 / FGSC A1120 / IAM 13836 / NRRL 3357 / JCM 12722 / SRRC 167) protein is Probable mannan endo-1,4-beta-mannosidase A (manA).